A 307-amino-acid chain; its full sequence is Taste receptor type 2 member 41 (307 aa).

The Extracellular segment spans residues 1-7 (MQAALTA). A helical transmembrane segment spans residues 8-28 (FFMLLFSLLSLLGIAANGFIV). Residues 29–40 (LVLGREWLRYGR) lie on the Cytoplasmic side of the membrane. Residues 41 to 61 (LLPLDMILISLGASRFCLQLV) traverse the membrane as a helical segment. Topologically, residues 62–88 (GTVHNFYYSAQKVEYSGGLGRQFFHLH) are extracellular. The chain crosses the membrane as a helical span at residues 89–109 (WHFLNSATFWFCSWLSVLFCV). Residues 110-129 (KIANITHPTFLWLKWRFPAW) are Cytoplasmic-facing. The chain crosses the membrane as a helical span at residues 130–150 (VPWLLLGSVLISFIITLLFFW). At 151–183 (VNYPAYQEFLIRKFSVNMTYKWNTRIETYYFPS) the chain is on the extracellular side. Residue Asn-167 is glycosylated (N-linked (GlcNAc...) asparagine). Residues 184–204 (LKLVIWSIPFSVFLVSIMLLI) traverse the membrane as a helical segment. At 205–234 (NSLRRHTQRMQHNGHSLQDPSTQAHTRALK) the chain is on the cytoplasmic side. A helical membrane pass occupies residues 235–255 (SLISFLILYALSFLSLIIDAT). The Extracellular portion of the chain corresponds to 256–264 (KFISMQNDF). A helical transmembrane segment spans residues 265–285 (YWPWQIAVYLCISIHPFILIF). At 286–307 (SNLKLRSVFSQLLLLARGFWVA) the chain is on the cytoplasmic side.

It belongs to the G-protein coupled receptor T2R family.

It localises to the membrane. Functionally, receptor that may play a role in the perception of bitterness and is gustducin-linked. May play a role in sensing the chemical composition of the gastrointestinal content. The activity of this receptor may stimulate alpha gustducin, mediate PLC-beta-2 activation and lead to the gating of TRPM5. This Pan paniscus (Pygmy chimpanzee) protein is Taste receptor type 2 member 41 (TAS2R41).